The following is a 331-amino-acid chain: NmrA-like family domain-containing oxidoreductase himF (331 aa).

Residues 8–13, 34–38, 55–56, 76–78, K133, and 155–167 contribute to the NADP(+) site; these read GATGNQ, RNAES, DG, TNG, and WFFE…QMAA.

Belongs to the NmrA-type oxidoreductase family.

It participates in secondary metabolite biosynthesis. In terms of biological role, nmrA-like family domain-containing oxidoreductase; part of the him gene cluster that mediates the biosynthesis of himeic acid A, a ubiquitin-activating enzyme (E1) inhibitor. First, himA, together with the trans-enoyl reductase himH, catalyzes the formation of apolyketide chain, which is then condensed with leucine by the NRPS activity of himA. Dieckmann cyclization and release from himA gives a tetramic acid intermediate as the product of himA PKS-NRPS. HimG then catalyzes alpha-oxidation of the tetramic acid ring, with a subsequent rearrangement to yield apyrone intermediate. Two terminal methyl groups of polyketide and amide side chains are oxidized to carboxylic acids by himC cytochrome P450 monooxygenase to form himeic acid A. Himeic acid A is further converted to himeic acid B and C during culture growth. No gene responsible for pyrone to pyridone conversion was found in the him gene cluster and himeic acid A is non-enzymatically converted to himeic acid C by the incorporation of an ammonium nitrogen atom in a pH5 buffer, and to himeic acid B at a conversion ratio of 50% during incubation in MeOH for 5 days. The protein is NmrA-like family domain-containing oxidoreductase himF of Aspergillus japonicus.